A 314-amino-acid polypeptide reads, in one-letter code: RNA 2',3'-cyclic phosphodiesterase (314 aa).

The active-site Proton donor is His-43. Short sequence motifs (HXTX) lie at residues 43-46 (HITL) and 129-132 (HITI). His-129 (proton acceptor) is an active-site residue.

Belongs to the 2H phosphoesterase superfamily. ThpR family.

The catalysed reaction is a 3'-end 2',3'-cyclophospho-ribonucleotide-RNA + H2O = a 3'-end 2'-phospho-ribonucleotide-RNA + H(+). Hydrolyzes RNA 2',3'-cyclic phosphodiester to an RNA 2'-phosphomonoester. In Geobacillus stearothermophilus (Bacillus stearothermophilus), this protein is RNA 2',3'-cyclic phosphodiesterase.